We begin with the raw amino-acid sequence, 549 residues long: ATP synthase subunit alpha (549 aa).

172 to 179 (GDRKTGKT) serves as a coordination point for ATP. The interval 513 to 549 (SSTGESVVPDEHVEAMDEEDLGKESVKVKKPAPQKKK) is disordered. Residues 540-549 (VKKPAPQKKK) are compositionally biased toward basic residues.

This sequence belongs to the ATPase alpha/beta chains family. In terms of assembly, F-type ATPases have 2 components, CF(1) - the catalytic core - and CF(0) - the membrane proton channel. CF(1) has five subunits: alpha(3), beta(3), gamma(1), delta(1), epsilon(1). CF(0) has three main subunits: a(1), b(2) and c(9-12). The alpha and beta chains form an alternating ring which encloses part of the gamma chain. CF(1) is attached to CF(0) by a central stalk formed by the gamma and epsilon chains, while a peripheral stalk is formed by the delta and b chains.

It is found in the cell membrane. It carries out the reaction ATP + H2O + 4 H(+)(in) = ADP + phosphate + 5 H(+)(out). Produces ATP from ADP in the presence of a proton gradient across the membrane. The alpha chain is a regulatory subunit. This Mycobacterium marinum (strain ATCC BAA-535 / M) protein is ATP synthase subunit alpha.